A 476-amino-acid chain; its full sequence is Exodeoxyribonuclease 7 large subunit (476 aa).

This sequence belongs to the XseA family. Heterooligomer composed of large and small subunits.

The protein resides in the cytoplasm. It carries out the reaction Exonucleolytic cleavage in either 5'- to 3'- or 3'- to 5'-direction to yield nucleoside 5'-phosphates.. Functionally, bidirectionally degrades single-stranded DNA into large acid-insoluble oligonucleotides, which are then degraded further into small acid-soluble oligonucleotides. This chain is Exodeoxyribonuclease 7 large subunit, found in Bartonella bacilliformis (strain ATCC 35685 / KC583 / Herrer 020/F12,63).